The following is a 704-amino-acid chain: Elongation factor G 1 (704 aa).

A tr-type G domain is found at 8 to 291; sequence ERYRNIGISA…AVIDYLPSPA (284 aa). GTP-binding positions include 17 to 24, 88 to 92, and 142 to 145; these read AHIDAGKT, DTPGH, and NKMD.

This sequence belongs to the TRAFAC class translation factor GTPase superfamily. Classic translation factor GTPase family. EF-G/EF-2 subfamily.

It localises to the cytoplasm. Catalyzes the GTP-dependent ribosomal translocation step during translation elongation. During this step, the ribosome changes from the pre-translocational (PRE) to the post-translocational (POST) state as the newly formed A-site-bound peptidyl-tRNA and P-site-bound deacylated tRNA move to the P and E sites, respectively. Catalyzes the coordinated movement of the two tRNA molecules, the mRNA and conformational changes in the ribosome. This is Elongation factor G 1 from Burkholderia mallei (strain ATCC 23344).